Here is a 337-residue protein sequence, read N- to C-terminus: MRVLGIETSCDETGIAIYDDKKGLLANQLYSQVKLHADYGGVVPELASRDHVRKTVPLIQAALKEAGLTASDIDAVAYTAGPGLVGALLVGATVGRSLAFAWNVPAIPVHHMEGHLLAPMLEDNPPEFPFVALLVSGGHTQLISVTGIGQYELLGESIDDAAGEAFDKTAKLLGLDYPGGPMLSKMASQGTAGRFVFPRPMTDRPGLDFSFSGLKTFAANTIRSNGGDEQTRADIARAFEDAVVDTLMIKCKRALESTGFKRLVMAGGVSANRTLRAKLAEMMQKRRGEVFYARPEFCTDNGAMIAYAGMVRFKAGVTADLGVTVRPRWPLAELPAA.

Residues histidine 111 and histidine 115 each contribute to the Fe cation site. Substrate-binding positions include 134–138, aspartate 167, glycine 180, and asparagine 272; that span reads LVSGG. Aspartate 300 serves as a coordination point for Fe cation.

It belongs to the KAE1 / TsaD family. Fe(2+) is required as a cofactor.

It is found in the cytoplasm. The enzyme catalyses L-threonylcarbamoyladenylate + adenosine(37) in tRNA = N(6)-L-threonylcarbamoyladenosine(37) in tRNA + AMP + H(+). Its function is as follows. Required for the formation of a threonylcarbamoyl group on adenosine at position 37 (t(6)A37) in tRNAs that read codons beginning with adenine. Is involved in the transfer of the threonylcarbamoyl moiety of threonylcarbamoyl-AMP (TC-AMP) to the N6 group of A37, together with TsaE and TsaB. TsaD likely plays a direct catalytic role in this reaction. This is tRNA N6-adenosine threonylcarbamoyltransferase from Salmonella agona (strain SL483).